The sequence spans 149 residues: Ribonuclease H (149 aa).

One can recognise an RNase H type-1 domain in the interval 4-145 (QRGVVEAFTD…ADALANQGID (142 aa)). Mg(2+)-binding residues include D13, E51, D73, and D137.

The protein belongs to the RNase H family. Monomer. Mg(2+) serves as cofactor.

The protein resides in the cytoplasm. The catalysed reaction is Endonucleolytic cleavage to 5'-phosphomonoester.. Its function is as follows. Endonuclease that specifically degrades the RNA of RNA-DNA hybrids. This chain is Ribonuclease H, found in Halorhodospira halophila (strain DSM 244 / SL1) (Ectothiorhodospira halophila (strain DSM 244 / SL1)).